The primary structure comprises 278 residues: Translation initiation factor IF-3, mitochondrial (278 aa).

The N-terminal 31 residues, 1 to 31 (MAALFLKRLTLQTVKSENSCIRCFGKHILQK), are a transit peptide targeting the mitochondrion. A disordered region spans residues 249-278 (KAYKETQETQERDTLNKDHGNDKESNVLHQ).

The protein belongs to the IF-3 family.

The protein resides in the mitochondrion. IF-3 binds to the 28S ribosomal subunit and shifts the equilibrium between 55S ribosomes and their 39S and 28S subunits in favor of the free subunits, thus enhancing the availability of 28S subunits on which protein synthesis initiation begins. In Homo sapiens (Human), this protein is Translation initiation factor IF-3, mitochondrial (MTIF3).